A 129-amino-acid polypeptide reads, in one-letter code: D-ribose pyranase 1 (129 aa).

Catalysis depends on His20, which acts as the Proton donor. Residues Asp28, His96, and 118–120 (YSN) contribute to the substrate site.

The protein belongs to the RbsD / FucU family. RbsD subfamily. In terms of assembly, homodecamer.

It localises to the cytoplasm. It carries out the reaction beta-D-ribopyranose = beta-D-ribofuranose. The protein operates within carbohydrate metabolism; D-ribose degradation; D-ribose 5-phosphate from beta-D-ribopyranose: step 1/2. Functionally, catalyzes the interconversion of beta-pyran and beta-furan forms of D-ribose. The polypeptide is D-ribose pyranase 1 (Rubrobacter xylanophilus (strain DSM 9941 / JCM 11954 / NBRC 16129 / PRD-1)).